The primary structure comprises 739 residues: Disintegrin and metalloproteinase domain-containing protein 18 (739 aa).

The signal sequence occupies residues 1–16 (MFLLLALLTELGRLQA). Positions 17-184 (HEGSEGIFLH…IKNLSKLLPQ (168 aa)) are excised as a propeptide. N36, N76, N122, N149, N156, N177, and N294 each carry an N-linked (GlcNAc...) asparagine glycan. Residues 177-687 (NLSKLLPQYL…EKGYNTHWNN (511 aa)) lie on the Extracellular side of the membrane. Residues 184-381 (QYLEIYIIVE…FETKCLQKLS (198 aa)) enclose the Peptidase M12B domain. 4 cysteine pairs are disulfide-bonded: C293–C376, C335–C360, C337–C342, and C450–C471. N-linked (GlcNAc...) asparagine glycans are attached at residues N359, N465, N561, N611, and N625. A Disintegrin domain is found at 390 to 479 (QPVCGNGILE…NCVPDTYALN (90 aa)). In terms of domain architecture, EGF-like spans 620–654 (MGYNCNATTKCKGKGICNNFGNCQCFPGHRPPDCK). Disulfide bonds link C624/C636, C630/C642, and C644/C653. Residues 688–708 (WFILSFCIFLPFFIVFTTVIF) form a helical membrane-spanning segment. The Cytoplasmic portion of the chain corresponds to 709 to 739 (KRNEISKSCNRENAEYNRNSSVVSESDDVGH).

Post-translationally, the prodomain and the metalloprotease-like domain are cleaved during the epididymal maturation of the spermatozoa. In terms of tissue distribution, expressed specifically in testis.

The protein resides in the membrane. In terms of biological role, sperm surface membrane protein that may be involved in spermatogenesis and fertilization. This is a non catalytic metalloprotease-like protein. In Homo sapiens (Human), this protein is Disintegrin and metalloproteinase domain-containing protein 18 (ADAM18).